The following is a 494-amino-acid chain: Smoothelin-like protein 1 (494 aa).

4 stretches are compositionally biased toward basic and acidic residues: residues 1–10, 74–104, 112–166, and 179–232; these read MEQKEGKLSE, DEVK…KEET, TGRK…KATV, and TGQR…KEEA. Positions 1–348 are disordered; the sequence is MEQKEGKLSE…ARPRGPRAQN (348 aa). Residues 123-145 adopt a coiled-coil conformation; it reads KEAEEKESTLASEKQKAEEKEAK. The segment covering 233–255 has biased composition (acidic residues); sequence DAKEEAEDAEEAEPGSPSEEQEQ. 2 stretches are compositionally biased toward low complexity: residues 269–279 and 302–314; these read PSSPEEWPESP and SPSA…SDVP. Residues 324–335 show a composition bias toward basic and acidic residues; it reads GEKKEKAPERRV. S336 is modified (phosphoserine). Residues 378-484 form the Calponin-homology (CH) domain; that stretch reads GGVKNMLLEW…YIQELYRSLV (107 aa). A calmodulin-binding region spans residues 476 to 494; the sequence is IQELYRSLVQKGLVKTKKK.

Belongs to the smoothelin family. As to quaternary structure, interacts with PPP1R12A. Post-translationally, maximal phosphorylation of Ser-336 correlates with maximal relaxation of aorta in response to acetylcholine. In terms of tissue distribution, expressed in striated muscles, specifically in type 2a fibers (at protein level).

The protein localises to the cytoplasm. The protein resides in the myofibril. Its subcellular location is the sarcomere. It is found in the i band. It localises to the m line. The protein localises to the nucleus. In terms of biological role, plays a role in the regulation of contractile properties of both striated and smooth muscles. When unphosphorylated, may inhibit myosin dephosphorylation. Phosphorylation at Ser-299 reduces this inhibitory activity. The sequence is that of Smoothelin-like protein 1 (SMTNL1) from Homo sapiens (Human).